Consider the following 353-residue polypeptide: Phosphate acyltransferase (353 aa).

It belongs to the PlsX family. As to quaternary structure, homodimer. Probably interacts with PlsY.

It is found in the cytoplasm. It catalyses the reaction a fatty acyl-[ACP] + phosphate = an acyl phosphate + holo-[ACP]. The protein operates within lipid metabolism; phospholipid metabolism. Catalyzes the reversible formation of acyl-phosphate (acyl-PO(4)) from acyl-[acyl-carrier-protein] (acyl-ACP). This enzyme utilizes acyl-ACP as fatty acyl donor, but not acyl-CoA. This is Phosphate acyltransferase from Syntrophobacter fumaroxidans (strain DSM 10017 / MPOB).